A 216-amino-acid chain; its full sequence is Large ribosomal subunit protein uL1 (216 aa).

This sequence belongs to the universal ribosomal protein uL1 family.

This is Large ribosomal subunit protein uL1 from Caenorhabditis elegans.